A 433-amino-acid chain; its full sequence is Chaperone SurA (433 aa).

The first 20 residues, 1–20 (MKNWRTLIFGLMFSVSTAFA), serve as a signal peptide directing secretion. 2 consecutive PpiC domains span residues 171–272 (DTEL…KVND) and 282–382 (VTEV…QLLD).

Its subcellular location is the periplasm. The catalysed reaction is [protein]-peptidylproline (omega=180) = [protein]-peptidylproline (omega=0). Chaperone involved in the correct folding and assembly of outer membrane proteins. Recognizes specific patterns of aromatic residues and the orientation of their side chains, which are found more frequently in integral outer membrane proteins. May act in both early periplasmic and late outer membrane-associated steps of protein maturation. The chain is Chaperone SurA from Photorhabdus laumondii subsp. laumondii (strain DSM 15139 / CIP 105565 / TT01) (Photorhabdus luminescens subsp. laumondii).